The chain runs to 663 residues: UvrABC system protein B (663 aa).

Positions 26 to 414 constitute a Helicase ATP-binding domain; sequence DGLESGLAKQ…DNVAEQVVRP (389 aa). An ATP-binding site is contributed by 39 to 46; sequence GVTGSGKT. A Beta-hairpin motif is present at residues 92 to 115; sequence YYDYYQPEAYVPASDTFIEKDASI. The region spanning 430–596 is the Helicase C-terminal domain; that stretch reads QVDDLMSEIR…GINKSVEDIL (167 aa). In terms of domain architecture, UVR spans 624–659; sequence VKQINALEKQMYSHAQNMEFELAAKIRDEYLLLKEQ.

The protein belongs to the UvrB family. In terms of assembly, forms a heterotetramer with UvrA during the search for lesions. Interacts with UvrC in an incision complex.

The protein localises to the cytoplasm. Its function is as follows. The UvrABC repair system catalyzes the recognition and processing of DNA lesions. A damage recognition complex composed of 2 UvrA and 2 UvrB subunits scans DNA for abnormalities. Upon binding of the UvrA(2)B(2) complex to a putative damaged site, the DNA wraps around one UvrB monomer. DNA wrap is dependent on ATP binding by UvrB and probably causes local melting of the DNA helix, facilitating insertion of UvrB beta-hairpin between the DNA strands. Then UvrB probes one DNA strand for the presence of a lesion. If a lesion is found the UvrA subunits dissociate and the UvrB-DNA preincision complex is formed. This complex is subsequently bound by UvrC and the second UvrB is released. If no lesion is found, the DNA wraps around the other UvrB subunit that will check the other stand for damage. This Legionella pneumophila subsp. pneumophila (strain Philadelphia 1 / ATCC 33152 / DSM 7513) protein is UvrABC system protein B.